A 298-amino-acid polypeptide reads, in one-letter code: (DL)-glycerol-3-phosphatase 1, mitochondrial (298 aa).

Residues methionine 1–phenylalanine 46 constitute a mitochondrion transit peptide. Catalysis depends on aspartate 77, which acts as the Nucleophile. Residues aspartate 77, aspartate 79, and aspartate 242 each contribute to the Mg(2+) site. Catalysis depends on aspartate 79, which acts as the Proton donor.

Belongs to the HAD-like hydrolase superfamily. DOG/GPP family. The cofactor is Mg(2+). In terms of tissue distribution, ubiquitous with highest expression in siliques. Mainly restricted to the meristem of immature flower and vascular elements of the root, shoot, leave, siliqua and developing embryo (at the protein level).

The protein resides in the mitochondrion. It carries out the reaction sn-glycerol 1-phosphate + H2O = glycerol + phosphate. It catalyses the reaction sn-glycerol 3-phosphate + H2O = glycerol + phosphate. The catalysed reaction is 5-amino-6-(5-phospho-D-ribitylamino)uracil + H2O = 5-amino-6-(D-ribitylamino)uracil + phosphate. Its function is as follows. Acts as a glycerol-3-phosphatase with higher stereospecificity for L-glycerol-3-phosphate than DL-glycerol-3-phosphate. Can also dephosphorylate in vitro 5-amino-6-(5-phospho-D-ribitylamino)uracil, also known as ARPP. The polypeptide is (DL)-glycerol-3-phosphatase 1, mitochondrial (Arabidopsis thaliana (Mouse-ear cress)).